Here is a 213-residue protein sequence, read N- to C-terminus: Ras-related protein Rab-19 (213 aa).

GTP-binding residues include Ser-24, Val-26, Gly-27, Lys-28, Thr-29, Cys-30, Asp-42, and Thr-47. Residue Thr-29 coordinates Mg(2+). The short motif at 37–52 is the Switch 1 element; the sequence is SGIFMDNQQNTIGVDF. Residues Thr-47 and Asp-70 each contribute to the Mg(2+) site. The Switch 2 signature appears at 72–87; sequence AGQERFRTITQSYYRS. Gly-73, Asn-128, Lys-129, Asp-131, Ser-159, Ala-160, and Lys-161 together coordinate GTP. S-geranylgeranyl cysteine attachment occurs at residues Cys-211 and Cys-213. Cys-213 bears the Cysteine methyl ester mark.

Belongs to the small GTPase superfamily. Rab family. Requires Mg(2+) as cofactor.

It is found in the cell membrane. The catalysed reaction is GTP + H2O = GDP + phosphate + H(+). Its activity is regulated as follows. Regulated by guanine nucleotide exchange factors (GEFs) which promote the exchange of bound GDP for free GTP. Regulated by GTPase activating proteins (GAPs) which increase the GTP hydrolysis activity. Inhibited by GDP dissociation inhibitors (GDIs). Functionally, the small GTPases Rab are key regulators of intracellular membrane trafficking, from the formation of transport vesicles to their fusion with membranes. Rabs cycle between an inactive GDP-bound form and an active GTP-bound form that is able to recruit to membranes different set of downstream effectors directly responsible for vesicle formation, movement, tethering and fusion. The chain is Ras-related protein Rab-19 (rab19) from Xenopus laevis (African clawed frog).